Here is a 237-residue protein sequence, read N- to C-terminus: Large ribosomal subunit protein uL1 (237 aa).

The protein belongs to the universal ribosomal protein uL1 family. In terms of assembly, part of the 50S ribosomal subunit.

Binds directly to 23S rRNA. The L1 stalk is quite mobile in the ribosome, and is involved in E site tRNA release. Functionally, protein L1 is also a translational repressor protein, it controls the translation of the L11 operon by binding to its mRNA. The sequence is that of Large ribosomal subunit protein uL1 from Thermosynechococcus vestitus (strain NIES-2133 / IAM M-273 / BP-1).